We begin with the raw amino-acid sequence, 389 residues long: Gastricsin (389 aa).

The N-terminal stretch at 1–16 (MKWMVVALVCLQLLEA) is a signal peptide. Positions 17 to 59 (KVTKVTLKKFKSIRENLREQGLLEDFLKTNHYDPAQKYHFGDF) are cleaved as a propeptide — activation peptide. The 314-residue stretch at 73–386 (YFGEISIGTP…DMGNNRVGFA (314 aa)) folds into the Peptidase A1 domain. Asp-91 is an active-site residue. Disulfide bonds link Cys-104/Cys-109 and Cys-268/Cys-272. Residue Asp-277 is part of the active site. An intrachain disulfide couples Cys-311 to Cys-344.

The protein belongs to the peptidase A1 family.

The protein resides in the secreted. It catalyses the reaction More restricted specificity than pepsin A, but shows preferential cleavage at Tyr-|-Xaa bonds. High activity on hemoglobin.. In terms of biological role, hydrolyzes a variety of proteins. This Suncus murinus (Asian house shrew) protein is Gastricsin (PGC).